We begin with the raw amino-acid sequence, 469 residues long: UDP-N-acetylmuramate--L-alanine ligase (469 aa).

112–118 (GTHGKTT) is a binding site for ATP.

It belongs to the MurCDEF family.

The protein resides in the cytoplasm. The enzyme catalyses UDP-N-acetyl-alpha-D-muramate + L-alanine + ATP = UDP-N-acetyl-alpha-D-muramoyl-L-alanine + ADP + phosphate + H(+). It functions in the pathway cell wall biogenesis; peptidoglycan biosynthesis. Its function is as follows. Cell wall formation. This chain is UDP-N-acetylmuramate--L-alanine ligase, found in Laribacter hongkongensis (strain HLHK9).